The sequence spans 400 residues: 2-[(L-alanin-3-ylcarbamoyl)methyl]-2-hydroxybutanedioate decarboxylase (400 aa).

Lysine 50 carries the post-translational modification N6-(pyridoxal phosphate)lysine. Pyridoxal 5'-phosphate is bound by residues glycine 228 and 266–269 (ECGR). Cysteine 344 acts as the Proton donor in catalysis. Tyrosine 373 is a binding site for pyridoxal 5'-phosphate.

The protein belongs to the Orn/Lys/Arg decarboxylase class-II family. In terms of assembly, homodimer. Pyridoxal 5'-phosphate serves as cofactor.

The catalysed reaction is 2-[(L-alanin-3-ylcarbamoyl)methyl]-2-hydroxybutanedioate + H(+) = 2-[(2-aminoethylcarbamoyl)methyl]-2-hydroxybutanedioate + CO2. It functions in the pathway siderophore biosynthesis. Its function is as follows. Catalyzes the decarboxylation of citryl-L-2,3-diaminopropionic acid to citryl-diaminoethane, the second step in staphyloferrin B biosynthesis. This Staphylococcus aureus (strain NCTC 8325 / PS 47) protein is 2-[(L-alanin-3-ylcarbamoyl)methyl]-2-hydroxybutanedioate decarboxylase.